Consider the following 68-residue polypeptide: DNA gyrase inhibitor YacG (68 aa).

Positions 14, 17, 29, and 33 each coordinate Zn(2+).

It belongs to the DNA gyrase inhibitor YacG family. In terms of assembly, interacts with GyrB. The cofactor is Zn(2+).

Functionally, inhibits all the catalytic activities of DNA gyrase by preventing its interaction with DNA. Acts by binding directly to the C-terminal domain of GyrB, which probably disrupts DNA binding by the gyrase. The chain is DNA gyrase inhibitor YacG from Azorhizobium caulinodans (strain ATCC 43989 / DSM 5975 / JCM 20966 / LMG 6465 / NBRC 14845 / NCIMB 13405 / ORS 571).